Reading from the N-terminus, the 206-residue chain is Small ribosomal subunit protein uS5 (206 aa).

Over residues 1–15 (MTDTPTKQEIQSKND) the composition is skewed to polar residues. The interval 1-50 (MTDTPTKQEIQSKNDNVPGATPVEQKKNNRNDRKRNRRGDSKNLERDSDW) is disordered. Basic and acidic residues predominate over residues 38–50 (RGDSKNLERDSDW). The S5 DRBM domain maps to 50 to 113 (WQERVVQIRR…SDGKKNLVRV (64 aa)).

This sequence belongs to the universal ribosomal protein uS5 family. Part of the 30S ribosomal subunit. Contacts proteins S4 and S8.

Its function is as follows. With S4 and S12 plays an important role in translational accuracy. In terms of biological role, located at the back of the 30S subunit body where it stabilizes the conformation of the head with respect to the body. The protein is Small ribosomal subunit protein uS5 of Prochlorococcus marinus (strain MIT 9301).